Reading from the N-terminus, the 262-residue chain is MALDEVKITRAIVESYLESFLKCTDVDVALVGAGPANLVAAKRLAEADVRVVLFEKRLSVGGGLWGGGMMFPRIVVQKEACRILDEYDIWYREFEEGYYVADSIEVVAKLTAGAIDAGAELINLVSVEDVMIREGDRIVGLVINWTAADMAGIHVDPLAIRARVVIDGTGHDAAVCRVVQKKIPGAIVGESGVIGEKPMWAALGEKIVVDATREVYPGLIVAGMAATTVAAGPRMGPIFGGMLLSGEKAASIALEKLAQSVD.

NAD(+)-binding positions include alanine 36, 55-56 (EK), glycine 63, valine 127, and 154-156 (HVD). Fe cation-binding residues include aspartate 156 and histidine 171. Methionine 224 contacts NAD(+). Arginine 234 contributes to the glycine binding site.

Belongs to the THI4 family. As to quaternary structure, homooctamer; tetramer of dimers. It depends on Fe(2+) as a cofactor.

The catalysed reaction is hydrogen sulfide + glycine + NAD(+) = ADP-5-ethyl-4-methylthiazole-2-carboxylate + nicotinamide + 3 H2O + H(+). It participates in cofactor biosynthesis; thiamine diphosphate biosynthesis. Involved in the biosynthesis of the thiazole moiety of thiamine. Catalyzes the conversion of NAD and glycine to adenosine diphosphate 5-(2-hydroxyethyl)-4-methylthiazole-2-carboxylate (ADT), an adenylated thiazole intermediate, using free sulfide as a source of sulfur. This Methanothrix thermoacetophila (strain DSM 6194 / JCM 14653 / NBRC 101360 / PT) (Methanosaeta thermophila) protein is Thiamine thiazole synthase.